Here is a 219-residue protein sequence, read N- to C-terminus: tRNA (guanine-N(7)-)-methyltransferase (219 aa).

S-adenosyl-L-methionine-binding residues include Glu-43, Asp-68, Glu-101, and Asn-124. Positions 128 and 160 each coordinate substrate.

Belongs to the class I-like SAM-binding methyltransferase superfamily. TrmB family.

The enzyme catalyses guanosine(46) in tRNA + S-adenosyl-L-methionine = N(7)-methylguanosine(46) in tRNA + S-adenosyl-L-homocysteine. It participates in tRNA modification; N(7)-methylguanine-tRNA biosynthesis. Catalyzes the formation of N(7)-methylguanine at position 46 (m7G46) in tRNA. This Clostridium botulinum (strain Eklund 17B / Type B) protein is tRNA (guanine-N(7)-)-methyltransferase.